A 215-amino-acid chain; its full sequence is Small ribosomal subunit protein bS6 (215 aa).

Disordered stretches follow at residues 121-153 (RENN…QKPK) and 187-215 (NQRQ…KDKQ). A compositionally biased stretch (basic and acidic residues) spans 144–153 (SRTEKAQKPK). A compositionally biased stretch (low complexity) spans 188–198 (QRQNQQNNNNN). Basic and acidic residues predominate over residues 199–215 (RFDRNRNRQHNRFKDKQ).

This sequence belongs to the bacterial ribosomal protein bS6 family.

Binds together with bS18 to 16S ribosomal RNA. In Mycoplasma pneumoniae (strain ATCC 29342 / M129 / Subtype 1) (Mycoplasmoides pneumoniae), this protein is Small ribosomal subunit protein bS6 (rpsF).